The chain runs to 136 residues: Protein PsiE (136 aa).

4 helical membrane passes run 15-35, 55-75, 82-102, and 108-128; these read ILQNVLNLGLLTLGLILVLFL, YELVEGLVIYFLYFEFIALIV, FHFPLRYFVYIGITAIVRLII, and PMDVLLYSAAILLLVITLWLC.

It belongs to the PsiE family.

It is found in the cell inner membrane. The polypeptide is Protein PsiE (Salmonella arizonae (strain ATCC BAA-731 / CDC346-86 / RSK2980)).